The sequence spans 2322 residues: MNYRIFLLFCTTTVLWSVVSTQLVLGKPPIFQNTGPVEQKVAVEGEIVRLKCDDAELAEQYEWRVGDASGDLIAASRFAQVTVSRTNDNQKYRCVARNTVGAAISPPSVVRSKYLDDFDASDESAQYDVLAGIGRHFVLRTPRLLSSRNLDISYSWIKDDSNQVTPDATHFVTANGDLVVTSVKRDDFGTYKLMASSDDLKEIVSKEYIVKDNGMAPSLQNTLSIIYFSPERTIVESSMPHDEKFDCVTSFEAKDDVRIRWFLNGQPITGSEVGIKTTMNNRRLIISNPSGFTRGEHKLECRADAAMGRTSDQNSAYLTFISRPVLKDLPNEIHKKVGSSLTLKCGVKKKSSMDIKWYRNGLMMNTQRGKLTIDRIRQEDFGLYQCEAVNEAGADMSSVWVKEGDINNDTMVMGMSEDGRSLEEEISMETPPPRKLKFFDSSKSQEQLFPFTSDIESSQRLTKTPKDLTAASGTDKITLECAAAGSPPPHIVWFLNGNGIQTDSVKYDFSNGDLTIHDIRKSDEGEYTCEISGTDVKASANVQVNGDSLIEYGPADQKSLIGTNVEFSCEVAKEYARKATVEWYLNDALLPVNGNSGLRISRNRKGSLIIRQVGPDNTGEYRCRVTVDGREENASAMLQIIEKPAMPERVRAELHNETMPAKVRVRWNEGFDGNEPIIKHAIEIRTMGPTGLWSDWTTAIDNIPKDDGKPCCWADIEDLRPSSTAEFRVVASNKHGPGKPSLPSSSVTMPQQPPSAAPRNVAASARSPHSVMVQWQQPKEEQDSGDFLGYVVRYRLAGYSSLTWNEKNLTTKDARNTLVDELITWREYEIQVAAYNKRGLGVFSESIEVTTAEGRPTQAPKNVRVKVLNSTAVSLEFTAPEQQRIPGVNLGYKVQFWKGEPEKGELYKQVILDPDRRQLSTVVNELEKFGHYNLTVLCFTTPGDGPKSNILRVVTEEDTPEAVDELSIAEVMYNGAVLTWNPPMKENGIVTKYTIRHWASSSPDVKTKHEVDGSTTNITIDGLQPSTRYGVDVMASTKKGDGPVEETKFESGVPPELPGRPSMLSIGDISATTVQLHFTPGFDGHTAIRQWIVEGKMADSSVFAHIFNVSSPKARSIIVTGLRPFTQYQLRLIAENVKGRGAPSEPSRTFETLQTNPETPSQRLFTEPVSATSISVSWTPLLATHWNGQPKGYLIVYREVDEDNWKEVRTPALRSSEHTVTDLRPFTTYEVNVFSENVFGRSLPTDAVKARTYESVPSGSPRNIVVTAEGSKSAIVKWDPVAELSTNGDVIGYKLRVVPERESLMADETREIDVPGQSTLMTKVSNLRPFTSYYVYMSAYTIVGNGPENSTPLSFETLEDVPAPPESFQCSQISEQDVRMKWLPPGSPNGKITNYVISYWKSHEPRSMAIDAQVAGNLLMFSAMSLSPNTQYTFAIKAKNSKGESEEAVAEVMTSSVRLPVRNAPAPVRDTTSQHLATEITIRWDESLPRKLTEDAESPVRAVQVSYQKTNEDEWLTLEKKFEYSKRRAVIKHLSPNSMFRFRIRFIGDFLESSWSPESEWMRTLPSAPFAQPISLKATPYERNSVQLEWVVPHKSTWNSDAIGYRIHYREYPSNETWQMEEIAVHDPHEDREEKVLAKLSTFRHYIIRMRLFNSEGEGPFSAPVFVYVGYSIPKRNLTNIITEPLSSSSIRVKWDAWPKEDSETVTSFKVRYVPVASVLSSVSSEEEVMIVDTNECILSDLRKFAEYQISVSPYNRAGEGKMSQVREKTLEDKPGPVGVLRFSDVLMDSVKVSWDEPAQPNGMVIGYIVNYKGYRMQEEFKNEDQQRTSRNYFDSHGLAEGVTYFFSVWAETSAGKGELRSANVTIGPSKDGPLPPSKPQITSGQSYVTLSWNDVANSDEIVGHLLQAKRVSVAEETENGYVSQRPRRNEIRGAKSAAQTSASSNSNRPTHPIGEWITLRPTDGKSEKEQVSYRELQPSSFYVFRVFTRNVRGIGRASPETEQLFVPESIPDDPFYTTWWFMALVAMAAFVLIVIIIAILCVTGSSAKYRREKRSRSIDSLQLADGNFASFQLKGTSAANMTRSRELPTRPGTTQSWLSDQSREPPAYGSVLGDGRNNGGVMNMYGLATDVIPPLPNSGPPHASLEAMQKLSALVGRDIRSQNTAYVVSSSARGSDNERNEYMPTRSDLYGTRSEYGRVEYRGHIPSSSGGSQPQGSPQQQQEPYDSFDEEDDVDDDTVIRGDRTMTDGADDIARHYGSTDQYRDTWRKVRDTDMVRAPILTNQQPSSAAGRSSTTDSTSEGPWANIPATPNLTAGFSSFV.

The N-terminal stretch at 1 to 26 is a signal peptide; sequence MNYRIFLLFCTTTVLWSVVSTQLVLG. The Extracellular segment spans residues 27–2020; that stretch reads KPPIFQNTGP…IPDDPFYTTW (1994 aa). 3 consecutive Ig-like C2-type domains span residues 28–105, 217–319, and 324–397; these read PPIF…AAIS, PSLQ…AYLT, and PVLK…ADMS. Disulfide bonds link cysteine 52–cysteine 94, cysteine 247–cysteine 301, and cysteine 345–cysteine 386. N-linked (GlcNAc...) asparagine glycosylation is present at asparagine 408. 2 consecutive Ig-like C2-type domains span residues 450 to 545 and 548 to 639; these read PFTS…VQVN and SLIE…AMLQ. 2 disulfide bridges follow: cysteine 481/cysteine 529 and cysteine 569/cysteine 623. N-linked (GlcNAc...) asparagine glycosylation is found at asparagine 633 and asparagine 656. 13 consecutive Fibronectin type-III domains span residues 646–752, 757–854, 859–958, 962–1056, 1060–1155, 1160–1255, 1260–1360, 1364–1458, 1464–1567, 1572–1672, 1674–1774, 1777–1873, and 1908–2010; these read MPER…MPQQ, APRN…TAEG, APKN…TEED, AVDE…VPPE, RPSM…TLQT, PSQR…TYES, SPRN…TLED, PPES…SSVR, APAP…TLPS, QPIS…VGYS, PKRN…LEDK, PVGV…SKDG, and QAKR…VPES. Residues 732–762 form a disordered region; that stretch reads SNKHGPGKPSLPSSSVTMPQQPPSAAPRNVA. N-linked (GlcNAc...) asparagine glycosylation is found at asparagine 808, asparagine 869, asparagine 933, and asparagine 1017. A compositionally biased stretch (basic and acidic residues) spans 1040–1049; it reads GDGPVEETKF. Residues 1040–1060 form a disordered region; that stretch reads GDGPVEETKFESGVPPELPGR. Asparagine 1108 is a glycosylation site (N-linked (GlcNAc...) asparagine). The interval 1139-1163 is disordered; it reads GRGAPSEPSRTFETLQTNPETPSQR. Residues 1146–1163 are compositionally biased toward polar residues; that stretch reads PSRTFETLQTNPETPSQR. 3 N-linked (GlcNAc...) asparagine glycosylation sites follow: asparagine 1615, asparagine 1677, and asparagine 1864. A disordered region spans residues 1916 to 1965; it reads EETENGYVSQRPRRNEIRGAKSAAQTSASSNSNRPTHPIGEWITLRPTDG. The span at 1935–1947 shows a compositional bias: low complexity; sequence AKSAAQTSASSNS. A helical transmembrane segment spans residues 2021–2041; the sequence is WFMALVAMAAFVLIVIIIAIL. Residues 2042–2322 lie on the Cytoplasmic side of the membrane; sequence CVTGSSAKYR…NLTAGFSSFV (281 aa). Disordered regions lie at residues 2081-2114, 2167-2254, and 2276-2322; these read NMTRSRELPTRPGTTQSWLSDQSREPPAYGSVLG, YVVS…ADDI, and MVRA…SSFV. Over residues 2092–2101 the composition is skewed to polar residues; that stretch reads PGTTQSWLSD. A compositionally biased stretch (low complexity) spans 2207–2223; it reads PSSSGGSQPQGSPQQQQ. The segment covering 2227 to 2238 has biased composition (acidic residues); the sequence is DSFDEEDDVDDD. Composition is skewed to polar residues over residues 2282 to 2302 and 2310 to 2322; these read LTNQQPSSAAGRSSTTDSTSE and ATPNLTAGFSSFV.

It belongs to the sidekick family.

It is found in the membrane. Cell adhesion protein. The protein is Protein sidekick homolog (rig-4) of Caenorhabditis briggsae.